Reading from the N-terminus, the 424-residue chain is Tyrosine--tRNA ligase (424 aa).

Y37 is a binding site for L-tyrosine. Positions 42-51 match the 'HIGH' region motif; it reads PTADSLHLGH. K144 carries the N6-acetyllysine modification. The L-tyrosine site is built by Y175 and Q179. The 'KMSKS' region signature appears at 235-239; the sequence is KFGKT. K238 serves as a coordination point for ATP. In terms of domain architecture, S4 RNA-binding spans 357–414; the sequence is ADLMQALVDSELQPSRGQARKTIASNAITINGEKQSDPEYFFKEEDRLFGRFTLLRRG.

Belongs to the class-I aminoacyl-tRNA synthetase family. TyrS type 1 subfamily. As to quaternary structure, homodimer.

Its subcellular location is the cytoplasm. It catalyses the reaction tRNA(Tyr) + L-tyrosine + ATP = L-tyrosyl-tRNA(Tyr) + AMP + diphosphate + H(+). In terms of biological role, catalyzes the attachment of tyrosine to tRNA(Tyr) in a two-step reaction: tyrosine is first activated by ATP to form Tyr-AMP and then transferred to the acceptor end of tRNA(Tyr). The polypeptide is Tyrosine--tRNA ligase (Shigella flexneri serotype 5b (strain 8401)).